A 406-amino-acid chain; its full sequence is CinA-like protein (406 aa).

It belongs to the CinA family.

This chain is CinA-like protein, found in Thermomicrobium roseum (strain ATCC 27502 / DSM 5159 / P-2).